The following is a 332-amino-acid chain: Ferrochelatase (332 aa).

Fe cation is bound by residues His201 and Glu283.

Belongs to the ferrochelatase family.

Its subcellular location is the cytoplasm. The catalysed reaction is heme b + 2 H(+) = protoporphyrin IX + Fe(2+). It participates in porphyrin-containing compound metabolism; protoheme biosynthesis; protoheme from protoporphyrin-IX: step 1/1. Functionally, catalyzes the ferrous insertion into protoporphyrin IX. This is Ferrochelatase from Francisella tularensis subsp. holarctica (strain FTNF002-00 / FTA).